The following is a 366-amino-acid chain: UDP-N-acetylglucosamine--N-acetylmuramyl-(pentapeptide) pyrophosphoryl-undecaprenol N-acetylglucosamine transferase (366 aa).

UDP-N-acetyl-alpha-D-glucosamine contacts are provided by residues 10–12 (TGG), asparagine 124, arginine 165, serine 192, isoleucine 247, and glutamine 292.

Belongs to the glycosyltransferase 28 family. MurG subfamily.

The protein resides in the cell inner membrane. It catalyses the reaction di-trans,octa-cis-undecaprenyl diphospho-N-acetyl-alpha-D-muramoyl-L-alanyl-D-glutamyl-meso-2,6-diaminopimeloyl-D-alanyl-D-alanine + UDP-N-acetyl-alpha-D-glucosamine = di-trans,octa-cis-undecaprenyl diphospho-[N-acetyl-alpha-D-glucosaminyl-(1-&gt;4)]-N-acetyl-alpha-D-muramoyl-L-alanyl-D-glutamyl-meso-2,6-diaminopimeloyl-D-alanyl-D-alanine + UDP + H(+). It functions in the pathway cell wall biogenesis; peptidoglycan biosynthesis. Cell wall formation. Catalyzes the transfer of a GlcNAc subunit on undecaprenyl-pyrophosphoryl-MurNAc-pentapeptide (lipid intermediate I) to form undecaprenyl-pyrophosphoryl-MurNAc-(pentapeptide)GlcNAc (lipid intermediate II). This Geotalea daltonii (strain DSM 22248 / JCM 15807 / FRC-32) (Geobacter daltonii) protein is UDP-N-acetylglucosamine--N-acetylmuramyl-(pentapeptide) pyrophosphoryl-undecaprenol N-acetylglucosamine transferase.